We begin with the raw amino-acid sequence, 566 residues long: Macrophage colony-stimulating factor 1 (566 aa).

The signal sequence occupies residues 1–32 (MTARGAAGRCPSSTWMGSRLLLVCLLVSRSVA). The Extracellular segment spans residues 33 to 508 (EVSEHCSHMI…SSIQDPQTSA (476 aa)). 3 N-linked (GlcNAc...) asparagine glycosylation sites follow: N106, N153, and N171. Disordered regions lie at residues 197–417 (PSSD…KLLP) and 434–484 (GKKS…GAAR). The span at 253-265 (PRSTCQTLESTEQ) shows a compositional bias: polar residues. O-linked (Xyl...) (chondroitin sulfate) serine glycosylation is present at S302. Residues 348-360 (DQQPTNITDTPLT) show a composition bias toward polar residues. An N-linked (GlcNAc...) asparagine glycan is attached at N353. O-linked (GalNAc...) threonine glycans are attached at residues T355 and T357. Basic and acidic residues predominate over residues 377-394 (EKTDGSSTLREDQQEPRS). The span at 400 to 410 (LNPQRVGNSAT) shows a compositional bias: polar residues. Positions 434 to 445 (GKKSTRDRRSPA) are enriched in basic and acidic residues. Residues 509-531 (FVFWVLGIILVLLAVGGLLFYSW) traverse the membrane as a helical segment. Residues 532 to 566 (KRRSHRDPRTLDSSVGRPEGSSLAQDEDRQVELPV) lie on the Cytoplasmic side of the membrane. Residues 538-566 (DPRTLDSSVGRPEGSSLAQDEDRQVELPV) are disordered. Positions 557–566 (DEDRQVELPV) are enriched in basic and acidic residues.

Homodimer or heterodimer; disulfide-linked. Likely to exist in multiple forms: homodimer consisting of 2 identical 150-200 kDa proteoglycan subunits, heterodimer consisting of a 150-200 kDa proteoglycan subunit and a truncated 43 kDa subunit, and a homodimer consisting of 2 identical 43 kDa subunits. Interacts with CSF1R. Post-translationally, N-glycosylated. In terms of processing, O-glycosylated; contains chondroitin sulfate.

It localises to the cell membrane. The protein resides in the secreted. Its subcellular location is the extracellular space. Functionally, cytokine that plays an essential role in the regulation of survival, proliferation and differentiation of hematopoietic precursor cells, especially mononuclear phagocytes, such as macrophages and monocytes. Promotes the release of pro-inflammatory chemokines, and thereby plays an important role in innate immunity and in inflammatory processes. Plays an important role in the regulation of osteoclast proliferation and differentiation, the regulation of bone resorption, and is required for normal bone development. Required for normal male and female fertility. Promotes reorganization of the actin cytoskeleton, regulates formation of membrane ruffles, cell adhesion and cell migration. Plays a role in lipoprotein clearance. The chain is Macrophage colony-stimulating factor 1 (Csf1) from Rattus norvegicus (Rat).